Consider the following 492-residue polypeptide: Catalase isozyme 2 (492 aa).

The interval 1 to 32 (MDPYKFRPSSSNDTPFWTTNAGDPVSNNNSSM) is disordered. A compositionally biased stretch (polar residues) spans 8 to 32 (PSSSNDTPFWTTNAGDPVSNNNSSM). Catalysis depends on residues histidine 65 and asparagine 138. A heme-binding site is contributed by tyrosine 348.

This sequence belongs to the catalase family. As to quaternary structure, homotetramer. It depends on heme as a cofactor. In terms of tissue distribution, abundant in hypocotyls and roots. Low levels are seen in the endosperms and cotyledons.

Its subcellular location is the peroxisome. It localises to the glyoxysome. It catalyses the reaction 2 H2O2 = O2 + 2 H2O. Functionally, occurs in almost all aerobically respiring organisms and serves to protect cells from the toxic effects of hydrogen peroxide. The protein is Catalase isozyme 2 (CAT2) of Ricinus communis (Castor bean).